We begin with the raw amino-acid sequence, 51 residues long: Large ribosomal subunit protein eL39 (51 aa).

Residues 32–51 (KGSVKQHPKMRHWRRNTLKK) form a disordered region. Over residues 33 to 51 (GSVKQHPKMRHWRRNTLKK) the composition is skewed to basic residues.

This sequence belongs to the eukaryotic ribosomal protein eL39 family.

This is Large ribosomal subunit protein eL39 from Methanococcus vannielii (strain ATCC 35089 / DSM 1224 / JCM 13029 / OCM 148 / SB).